Reading from the N-terminus, the 329-residue chain is MKHFLTLNDFNRDEILAMVDVALELKYESLHIGNKPYLKGKVLAMIFEKSSTRTRVSFESGIFQLGGQGIFLSHKDIQLGRGEPIKDTARVISSMVDMIMMRTSEHSRLEEFASYSSVPVINGLSDDFHPVQLIADYLTMIECGIYLTHHNPLYPTKGKGGRNPIVAYIGDGNNMAHSWINLAGILGFELRIASPIGYAPKADIITKAQDMCIQSGGKIKILNDAKEAVSNANVVVTDTWASMGQEEQKEQRKCAFANFCVDEAMMSYAQKDAIFLHCLPAYRGQEVSEGVLEGAQSKVFQEAQNRLHAQKGIMLYLARINKIPLVSVE.

Residues 51 to 54 (STRT), Gln78, Arg102, and 129 to 132 (HPVQ) each bind carbamoyl phosphate. Residues Asn174, Asp238, and 242–243 (SM) contribute to the L-ornithine site. Carbamoyl phosphate is bound by residues 278 to 279 (CL) and Arg306.

This sequence belongs to the aspartate/ornithine carbamoyltransferase superfamily. OTCase family.

It localises to the cytoplasm. It catalyses the reaction carbamoyl phosphate + L-ornithine = L-citrulline + phosphate + H(+). It participates in amino-acid biosynthesis; L-arginine biosynthesis; L-arginine from L-ornithine and carbamoyl phosphate: step 1/3. Functionally, reversibly catalyzes the transfer of the carbamoyl group from carbamoyl phosphate (CP) to the N(epsilon) atom of ornithine (ORN) to produce L-citrulline. The polypeptide is Ornithine carbamoyltransferase (Helicobacter hepaticus (strain ATCC 51449 / 3B1)).